Here is a 412-residue protein sequence, read N- to C-terminus: Class E basic helix-loop-helix protein 40 (412 aa).

The interval Met1–Glu21 is disordered. The segment at Met1–Gln139 is essential for interaction with BMAL1, E-box binding and repressor activity against the CLOCK-BMAL1 heterodimer. The region spanning Thr52–Leu107 is the bHLH domain. Residues Leu75–Leu79 are necessary for interaction with RXRA and repressor activity against RXRA. The region spanning Phe142–Leu175 is the Orange domain. Lys159 is covalently cross-linked (Glycyl lysine isopeptide (Lys-Gly) (interchain with G-Cter in SUMO1, SUMO2 and SUMO3)). Residue Lys167 forms a Glycyl lysine isopeptide (Lys-Gly) (interchain with G-Cter in SUMO2) linkage. Disordered regions lie at residues Leu182–Val256 and Lys279–Glu298. Ser235 is modified (phosphoserine). Lys279 is covalently cross-linked (Glycyl lysine isopeptide (Lys-Gly) (interchain with G-Cter in SUMO1); alternate). Lys279 participates in a covalent cross-link: Glycyl lysine isopeptide (Lys-Gly) (interchain with G-Cter in SUMO1, SUMO2 and SUMO3); alternate. Residue Lys279 forms a Glycyl lysine isopeptide (Lys-Gly) (interchain with G-Cter in SUMO2); alternate linkage. Lys288 is covalently cross-linked (Glycyl lysine isopeptide (Lys-Gly) (interchain with G-Cter in SUMO2)). Ser383 bears the Phosphoserine mark.

Homodimer. Heterodimer with BHLHE41/DEC2. Interacts with TCF3/E47. Interacts with ubiquitin-conjugating enzyme UBE2I/UBC9. Interacts with HDAC1, SUMO1, RXRA and BMAL1. Ubiquitinated; which may lead to proteasomal degradation. In terms of processing, sumoylation inhibits its ubiquitination and promotes its negative regulation of the CLOCK-BMAL1 heterodimer transcriptional activator activity.

It is found in the cytoplasm. Its subcellular location is the nucleus. In terms of biological role, transcriptional repressor involved in the regulation of the circadian rhythm by negatively regulating the activity of the clock genes and clock-controlled genes. Acts as the negative limb of a novel autoregulatory feedback loop (DEC loop) which differs from the one formed by the PER and CRY transcriptional repressors (PER/CRY loop). Both these loops are interlocked as it represses the expression of PER1/2 and in turn is repressed by PER1/2 and CRY1/2. Represses the activity of the circadian transcriptional activator: CLOCK-BMAL1|BMAL2 heterodimer by competing for the binding to E-box elements (5'-CACGTG-3') found within the promoters of its target genes. Negatively regulates its own expression and the expression of DBP and BHLHE41/DEC2. Acts as a corepressor of RXR and the RXR-LXR heterodimers and represses the ligand-induced RXRA and NR1H3/LXRA transactivation activity. May be involved in the regulation of chondrocyte differentiation via the cAMP pathway. Represses the transcription of NR0B2 and attentuates the transactivation of NR0B2 by the CLOCK-BMAL1 complex. Drives the circadian rhythm of blood pressure through transcriptional repression of ATP1B1 in the cardiovascular system. The sequence is that of Class E basic helix-loop-helix protein 40 (BHLHE40) from Bos taurus (Bovine).